Consider the following 995-residue polypeptide: Probable copper-transporting ATPase HMA5 (995 aa).

Over 1-299 the chain is Cytoplasmic; it reads MATKLLSLTC…QGEIKQYYKS (299 aa). HMA domains lie at 51 to 117 and 129 to 195; these read SRAV…FEAS and QVCR…FEAV. Residues cysteine 62, cysteine 65, cysteine 140, and cysteine 143 each contribute to the Cu(+) site. An HMA 3; degenerate domain is found at 204-270; that stretch reads SKIDLKIDGE…VIESTVFGHS (67 aa). The helical transmembrane segment at 300 to 321 threads the bilayer; it reads FLWSLVFTVPVFLTAMVFMYIP. Residues 322–340 lie on the Extracellular side of the membrane; sequence GIKDLLMFKVINMLTVGEI. The helical transmembrane segment at 341–360 threads the bilayer; it reads IRCVLATPVQFVIGWRFYTG. Over 361–367 the chain is Cytoplasmic; the sequence is SYKALRR. A helical membrane pass occupies residues 368-388; that stretch reads GSANMDVLIALGTNAAYFYSL. Residues 389–406 are Extracellular-facing; that stretch reads YTVLRAATSPDFKGVDFF. Residues 407 to 427 traverse the membrane as a helical segment; that stretch reads ETSAMLISFIILGKYLEVMAK. Topologically, residues 428-561 are cytoplasmic; sequence GKTSQAIAKL…KAPVQKLADR (134 aa). The chain crosses the membrane as a helical span at residues 562–584; sequence ISKFFVPLVIFLSFSTWLAWFLA. The Extracellular portion of the chain corresponds to 585 to 605; that stretch reads GKLHWYPESWIPSSMDSFELA. A helical transmembrane segment spans residues 606–623; it reads LQFGISVMVIACPCALGL. Topologically, residues 624–920 are cytoplasmic; sequence ATPTAVMVGT…DLSRKTFSRI (297 aa). Aspartate 661 acts as the 4-aspartylphosphate intermediate in catalysis. The Mg(2+) site is built by aspartate 866 and aspartate 870. The helical transmembrane segment at 921–940 threads the bilayer; sequence RLNYVWALGYNLMGIPIAAG. The Extracellular portion of the chain corresponds to 941–952; that stretch reads VLFPGTRFRLPP. The chain crosses the membrane as a helical span at residues 953–971; it reads WIAGAAMAASSVSVVCCSL. At 972 to 995 the chain is on the cytoplasmic side; sequence LLKNYKRPKKLDHLEIREIQVERV.

This sequence belongs to the cation transport ATPase (P-type) (TC 3.A.3) family. Type IB subfamily. In terms of assembly, interacts with ATX1. In terms of tissue distribution, expressed in roots and flowers.

The protein resides in the membrane. It carries out the reaction Cu(+)(in) + ATP + H2O = Cu(+)(out) + ADP + phosphate + H(+). In terms of biological role, involved in copper import into the cell. May play a role in copper detoxification in roots. This chain is Probable copper-transporting ATPase HMA5 (HMA5), found in Arabidopsis thaliana (Mouse-ear cress).